The primary structure comprises 248 residues: 2,3-bisphosphoglycerate-dependent phosphoglycerate mutase (248 aa).

Substrate-binding positions include 8–15 (RHGESTWN), 21–22 (TG), arginine 60, 87–90 (ERHY), lysine 98, and 114–115 (RR). The active-site Tele-phosphohistidine intermediate is the histidine 9. Catalysis depends on glutamate 87, which acts as the Proton donor/acceptor. The segment at 117 to 137 (YDTPPPALEPTDPRASYDDPR) is disordered. Residues 127–137 (TDPRASYDDPR) show a composition bias toward basic and acidic residues. 183-184 (GN) lines the substrate pocket.

This sequence belongs to the phosphoglycerate mutase family. BPG-dependent PGAM subfamily. In terms of assembly, homodimer.

It carries out the reaction (2R)-2-phosphoglycerate = (2R)-3-phosphoglycerate. Its pathway is carbohydrate degradation; glycolysis; pyruvate from D-glyceraldehyde 3-phosphate: step 3/5. In terms of biological role, catalyzes the interconversion of 2-phosphoglycerate and 3-phosphoglycerate. The polypeptide is 2,3-bisphosphoglycerate-dependent phosphoglycerate mutase (Cupriavidus taiwanensis (strain DSM 17343 / BCRC 17206 / CCUG 44338 / CIP 107171 / LMG 19424 / R1) (Ralstonia taiwanensis (strain LMG 19424))).